The following is a 208-amino-acid chain: FMN-dependent NADH:quinone oxidoreductase 2 (208 aa).

This sequence belongs to the azoreductase type 1 family. As to quaternary structure, homodimer. FMN serves as cofactor.

The catalysed reaction is 2 a quinone + NADH + H(+) = 2 a 1,4-benzosemiquinone + NAD(+). The enzyme catalyses N,N-dimethyl-1,4-phenylenediamine + anthranilate + 2 NAD(+) = 2-(4-dimethylaminophenyl)diazenylbenzoate + 2 NADH + 2 H(+). In terms of biological role, quinone reductase that provides resistance to thiol-specific stress caused by electrophilic quinones. Its function is as follows. Also exhibits azoreductase activity. Catalyzes the reductive cleavage of the azo bond in aromatic azo compounds to the corresponding amines. The sequence is that of FMN-dependent NADH:quinone oxidoreductase 2 from Bacillus anthracis.